A 137-amino-acid chain; its full sequence is LAVCVSLLGAANIPPQHLNLCQFKEMIRYTIPCEKTWLEYTHYGCYCGYGGSGTPVDALDRCCYVHDNCYGDAEKKHKCNPKTQSYSYKLTKRTIICYDAAGTCARIVCDCDRTAALCFGNSEYIGAHKNIDTARYC.

The signal sequence occupies residues 1 to 10 (LAVCVSLLGA). A propeptide spanning residues 11-18 (ANIPPQHL) is cleaved from the precursor. Intrachain disulfides connect C45–C137, C47–C63, C62–C118, C69–C111, C79–C104, and C97–C109. The Ca(2+) site is built by Y46, G48, and G50. Residue H66 is part of the active site. A Ca(2+)-binding site is contributed by D67. D112 is a catalytic residue.

Belongs to the phospholipase A2 family. Group I subfamily. D49 sub-subfamily. In terms of assembly, heterodimer; disulfide-linked. The A chains have phospholipase A2 activity and the B chains show homology with the basic protease inhibitors. It depends on Ca(2+) as a cofactor. As to expression, expressed by the venom gland.

The protein resides in the secreted. It carries out the reaction a 1,2-diacyl-sn-glycero-3-phosphocholine + H2O = a 1-acyl-sn-glycero-3-phosphocholine + a fatty acid + H(+). Functionally, snake venom phospholipase A2 (PLA2) that inhibits neuromuscular transmission by blocking acetylcholine release from the nerve termini. PLA2 catalyzes the calcium-dependent hydrolysis of the 2-acyl groups in 3-sn-phosphoglycerides. The protein is Basic phospholipase A2 beta-bungarotoxin A-AL4 chain of Bungarus multicinctus (Many-banded krait).